Consider the following 544-residue polypeptide: Cytochrome P450 monooxygenase notG' (544 aa).

Positions 1–22 (MELPFSAMSLLYLLVGIAGVIS) are cleaved as a signal peptide. Transmembrane regions (helical) follow at residues 42-62 (WYTL…GLPL) and 66-86 (AKAT…SLLL). Residues asparagine 226 and asparagine 404 are each glycosylated (N-linked (GlcNAc...) asparagine). A heme-binding site is contributed by cysteine 487.

The protein belongs to the cytochrome P450 family. Requires heme as cofactor.

The protein localises to the membrane. It functions in the pathway alkaloid biosynthesis. Cytochrome P450 monooxygenase; part of the gene cluster that mediates the biosynthesis of notoamide, a fungal indole alkaloid that belongs to a family of natural products containing a characteristic bicyclo[2.2.2]diazaoctane core. The first step of notoamide biosynthesis involves coupling of L-proline and L-tryptophan by the bimodular NRPS notE', to produce cyclo-L-tryptophan-L-proline called brevianamide F. The reverse prenyltransferase notF' then acts as a deoxybrevianamide E synthase and converts brevianamide F to deoxybrevianamide E via reverse prenylation at C-2 of the indole ring leading to the bicyclo[2.2.2]diazaoctane core. Deoxybrevianamide E is further hydroxylated at C-6 of the indole ring, likely catalyzed by the cytochrome P450 monooxygenase notG', to yield 6-hydroxy-deoxybrevianamide E. 6-hydroxy-deoxybrevianamide E is a specific substrate of the prenyltransferase notC' for normal prenylation at C-7 to produce 6-hydroxy-7-prenyl-deoxybrevianamide, also called notoamide S. As the proposed pivotal branching point in notoamide biosynthesis, notoamide S can be diverted to notoamide E through an oxidative pyran ring closure putatively catalyzed by either notH' cytochrome P450 monooxygenase or the notD' FAD-linked oxidoreductase. This step would be followed by an indole 2,3-epoxidation-initiated pinacol-like rearrangement catalyzed by the notB' FAD-dependent monooxygenase leading to the formation of notoamide C and notoamide D. On the other hand notoamide S is converted to notoamide T by notH' (or notD'), a bifunctional oxidase that also functions as the intramolecular Diels-Alderase responsible for generation of (-)-notoamide T. To generate antipodal (+)-notoaminide T, notH (or notD) in Aspergillus strain MF297-2 is expected to catalyze a Diels-Alder reaction leading to the opposite stereochemistry. The remaining oxidoreductase notD' (or notH') likely catalyzes the oxidative pyran ring formation to yield (-)-stephacidin A. The FAD-dependent monooxygenase notI' is highly similar to notB' and is predicted to catalyze a similar conversion from (-)-stephacidin A to (+)-notoamide B via the 2,3-epoxidation of (-)-stephacidin A followed by a pinacol-type rearrangement. Finally, it remains unclear which enzyme could be responsible for the final hydroxylation steps leading to notoamide A and sclerotiamide. This chain is Cytochrome P450 monooxygenase notG', found in Aspergillus versicolor.